Consider the following 236-residue polypeptide: H2HPP isomerase (236 aa).

Cupin type-1 domains are found at residues 40 to 106 (YVPP…AIDI) and 151 to 215 (NIPG…SKSV). A divalent metal cation is bound by residues His-50, His-52, Gln-56, His-91, His-162, His-164, Gln-168, and His-202. Substrate is bound at residue Tyr-223.

In terms of assembly, monomer. The cofactor is Fe(2+). Co(2+) serves as cofactor.

The protein localises to the cytoplasm. The catalysed reaction is 3-[(4R)-4-hydroxycyclohexa-1,5-dien-1-yl]-2-oxopropanoate = 3-[(1E,4R)-4-hydroxycyclohex-2-en-1-ylidene]pyruvate. Its pathway is antibiotic biosynthesis; bacilysin biosynthesis. In terms of biological role, part of the bacABCDEF operon responsible for the biosynthesis of the nonribosomally synthesized dipeptide antibiotic bacilysin, composed of L-alanine and L-anticapsin. Bacilysin is an irreversible inactivator of the glutaminase domain of glucosamine synthetase. BacB catalyzes the allylic isomerization of the endocyclic-delta(4),delta(8)-7R-dihydro-hydroxyphenylpyruvate (en-H2HPP) to generate a mixture of 3E,7R- and 3Z, 7R-olefins of the exocyclic-delta(3),delta(5)-dihydro-hydroxyphenylpyruvate (ex-H2HPP). The protein is H2HPP isomerase of Bacillus subtilis.